We begin with the raw amino-acid sequence, 549 residues long: Glucose-6-phosphate isomerase (549 aa).

The active-site Proton donor is the Glu355. Residues His386 and Lys514 contribute to the active site.

The protein belongs to the GPI family.

The protein localises to the cytoplasm. It catalyses the reaction alpha-D-glucose 6-phosphate = beta-D-fructose 6-phosphate. It functions in the pathway carbohydrate biosynthesis; gluconeogenesis. The protein operates within carbohydrate degradation; glycolysis; D-glyceraldehyde 3-phosphate and glycerone phosphate from D-glucose: step 2/4. Catalyzes the reversible isomerization of glucose-6-phosphate to fructose-6-phosphate. This is Glucose-6-phosphate isomerase from Salmonella paratyphi C (strain RKS4594).